Here is a 499-residue protein sequence, read N- to C-terminus: Putative hydrolase YuaR (499 aa).

The first 26 residues, 1-26 (MRVIMKPLRRTLVFFIFSVFLCGTVS), serve as a signal peptide directing secretion. An AB hydrolase-1 domain is found at 94–393 (GSVIIISGGP…DAFPAVNFER (300 aa)). The active-site Nucleophile is Ser-207. Asp-433 is a catalytic residue. The active-site Proton donor is the His-460.

The protein belongs to the peptidase S33 family.

The chain is Putative hydrolase YuaR (yuaR) from Escherichia coli (strain K12).